The sequence spans 923 residues: Isoleucine--tRNA ligase (923 aa).

The short motif at 57–67 is the 'HIGH' region element; that stretch reads PYANGDIHIGT. An L-isoleucyl-5'-AMP-binding site is contributed by E561. A 'KMSKS' region motif is present at residues 602–606; the sequence is AMHKS. An ATP-binding site is contributed by K605. C895, C898, C915, and C918 together coordinate Zn(2+).

This sequence belongs to the class-I aminoacyl-tRNA synthetase family. IleS type 1 subfamily. In terms of assembly, monomer. The cofactor is Zn(2+).

The protein resides in the cytoplasm. It catalyses the reaction tRNA(Ile) + L-isoleucine + ATP = L-isoleucyl-tRNA(Ile) + AMP + diphosphate. Its function is as follows. Catalyzes the attachment of isoleucine to tRNA(Ile). As IleRS can inadvertently accommodate and process structurally similar amino acids such as valine, to avoid such errors it has two additional distinct tRNA(Ile)-dependent editing activities. One activity is designated as 'pretransfer' editing and involves the hydrolysis of activated Val-AMP. The other activity is designated 'posttransfer' editing and involves deacylation of mischarged Val-tRNA(Ile). The protein is Isoleucine--tRNA ligase of Brachyspira hyodysenteriae (strain ATCC 49526 / WA1).